We begin with the raw amino-acid sequence, 367 residues long: 4-hydroxy-3-methylbut-2-en-1-yl diphosphate synthase (flavodoxin) (367 aa).

[4Fe-4S] cluster is bound by residues cysteine 270, cysteine 273, cysteine 305, and glutamate 312.

The protein belongs to the IspG family. [4Fe-4S] cluster is required as a cofactor.

The catalysed reaction is (2E)-4-hydroxy-3-methylbut-2-enyl diphosphate + oxidized [flavodoxin] + H2O + 2 H(+) = 2-C-methyl-D-erythritol 2,4-cyclic diphosphate + reduced [flavodoxin]. The protein operates within isoprenoid biosynthesis; isopentenyl diphosphate biosynthesis via DXP pathway; isopentenyl diphosphate from 1-deoxy-D-xylulose 5-phosphate: step 5/6. Its function is as follows. Converts 2C-methyl-D-erythritol 2,4-cyclodiphosphate (ME-2,4cPP) into 1-hydroxy-2-methyl-2-(E)-butenyl 4-diphosphate. The polypeptide is 4-hydroxy-3-methylbut-2-en-1-yl diphosphate synthase (flavodoxin) (Buchnera aphidicola subsp. Schizaphis graminum (strain Sg)).